Reading from the N-terminus, the 284-residue chain is Urease accessory protein UreD (284 aa).

Belongs to the UreD family. As to quaternary structure, ureD, UreF and UreG form a complex that acts as a GTP-hydrolysis-dependent molecular chaperone, activating the urease apoprotein by helping to assemble the nickel containing metallocenter of UreC. The UreE protein probably delivers the nickel.

The protein resides in the cytoplasm. Its function is as follows. Required for maturation of urease via the functional incorporation of the urease nickel metallocenter. In Bordetella bronchiseptica (strain ATCC BAA-588 / NCTC 13252 / RB50) (Alcaligenes bronchisepticus), this protein is Urease accessory protein UreD.